Consider the following 491-residue polypeptide: Glycogen synthase (491 aa).

Residue R20 coordinates ADP-alpha-D-glucose.

The protein belongs to the glycosyltransferase 1 family. Bacterial/plant glycogen synthase subfamily.

The enzyme catalyses [(1-&gt;4)-alpha-D-glucosyl](n) + ADP-alpha-D-glucose = [(1-&gt;4)-alpha-D-glucosyl](n+1) + ADP + H(+). Its pathway is glycan biosynthesis; glycogen biosynthesis. Functionally, synthesizes alpha-1,4-glucan chains using ADP-glucose. The chain is Glycogen synthase from Prosthecochloris aestuarii (strain DSM 271 / SK 413).